We begin with the raw amino-acid sequence, 84 residues long: Hirudin-HM2 (84 aa).

The N-terminal stretch at 1–20 is a signal peptide; sequence MFSLKLFVVFLAVCICVSQA. The tract at residues 21 to 23 is interaction with thrombin active site; the sequence is VSY. Intrachain disulfides connect Cys26–Cys34, Cys36–Cys48, and Cys42–Cys57. The disordered stretch occupies residues 53 to 84; sequence SGNQCVHGEGTPKPKSQTEGDFEEIPDEDILN. Residue Thr63 is glycosylated (O-linked (GalNAc...) threonine). Residues 72 to 84 are compositionally biased toward acidic residues; that stretch reads GDFEEIPDEDILN. The segment at 73–84 is interaction with fibrinogen-binding exosite of thrombin; it reads DFEEIPDEDILN.

The protein belongs to the protease inhibitor I14 (hirudin) family.

It localises to the secreted. Its function is as follows. Hirudin is a potent thrombin-specific protease inhibitor. It forms a stable non-covalent complex with alpha-thrombin, thereby abolishing its ability to cleave fibrinogen. The sequence is that of Hirudin-HM2 from Hirudinaria manillensis (Asian medical leech).